Reading from the N-terminus, the 65-residue chain is DNA gyrase inhibitor YacG (65 aa).

Zn(2+) is bound by residues C9, C12, C28, and C32. Positions 45-65 (KRIPSSGDLSESDDWSEEPKQ) are disordered. Residues 54 to 65 (SESDDWSEEPKQ) are compositionally biased toward acidic residues.

Belongs to the DNA gyrase inhibitor YacG family. In terms of assembly, interacts with GyrB. Zn(2+) is required as a cofactor.

In terms of biological role, inhibits all the catalytic activities of DNA gyrase by preventing its interaction with DNA. Acts by binding directly to the C-terminal domain of GyrB, which probably disrupts DNA binding by the gyrase. The polypeptide is DNA gyrase inhibitor YacG (Shigella boydii serotype 18 (strain CDC 3083-94 / BS512)).